The chain runs to 273 residues: Zinc finger protein 80 (273 aa).

2 C2H2-type zinc fingers span residues 49–71 (YKCK…QQIH) and 77–99 (YECQ…MRIH). A C2H2-type 3; atypical zinc finger spans residues 105-127 (CKCVECGKVFNRRSHLLCYRQIH). 4 consecutive C2H2-type zinc fingers follow at residues 133–155 (YECS…RVTH), 161–183 (FGCK…MKIH), 189–211 (CKCS…SMTH), and 217–239 (YECK…TRSH).

The protein belongs to the krueppel C2H2-type zinc-finger protein family.

It is found in the nucleus. Functionally, may be involved in transcriptional regulation. This chain is Zinc finger protein 80 (ZNF80), found in Homo sapiens (Human).